The chain runs to 100 residues: Urease subunit gamma (100 aa).

This sequence belongs to the urease gamma subunit family. Heterotrimer of UreA (gamma), UreB (beta) and UreC (alpha) subunits. Three heterotrimers associate to form the active enzyme.

Its subcellular location is the cytoplasm. The enzyme catalyses urea + 2 H2O + H(+) = hydrogencarbonate + 2 NH4(+). The protein operates within nitrogen metabolism; urea degradation; CO(2) and NH(3) from urea (urease route): step 1/1. The polypeptide is Urease subunit gamma (Prochlorococcus marinus subsp. pastoris (strain CCMP1986 / NIES-2087 / MED4)).